A 101-amino-acid polypeptide reads, in one-letter code: Small ribosomal subunit protein uS14 (101 aa).

A disordered region spans residues 52 to 72 (PRDSSPVRQRRRCRSTGRPRG). The span at 59-72 (RQRRRCRSTGRPRG) shows a compositional bias: basic residues.

Belongs to the universal ribosomal protein uS14 family. In terms of assembly, part of the 30S ribosomal subunit. Contacts proteins S3 and S10.

In terms of biological role, binds 16S rRNA, required for the assembly of 30S particles and may also be responsible for determining the conformation of the 16S rRNA at the A site. This chain is Small ribosomal subunit protein uS14, found in Nitrosococcus oceani (strain ATCC 19707 / BCRC 17464 / JCM 30415 / NCIMB 11848 / C-107).